The primary structure comprises 458 residues: N-acetylgalactosamine kinase (458 aa).

Arg-43, Glu-49, His-50, and Asp-52 together coordinate alpha-D-galactose. ATP is bound by residues Gly-143, Ser-145, and Ser-146. Asp-190 provides a ligand contact to alpha-D-galactose. Catalysis depends on Asp-190, which acts as the Proton acceptor. Asn-233 and Lys-234 together coordinate ATP.

It belongs to the GHMP kinase family. GalK subfamily. As to quaternary structure, monomer.

It catalyses the reaction N-acetyl-alpha-D-galactosamine + ATP = N-acetyl-alpha-D-galactosamine 1-phosphate + ADP + H(+). Its function is as follows. Acts on GalNAc. Also acts as a galactokinase when galactose is present at high concentrations. May be involved in a salvage pathway for the reutilization of free GalNAc derived from the degradation of complex carbohydrates. This is N-acetylgalactosamine kinase (GALK2) from Homo sapiens (Human).